The sequence spans 38 residues: Photosystem II reaction center protein L (38 aa).

The chain crosses the membrane as a helical span at residues 17–37 (GLYWGLLLIFVLAVLFSSYFF).

The protein belongs to the PsbL family. As to quaternary structure, PSII is composed of 1 copy each of membrane proteins PsbA, PsbB, PsbC, PsbD, PsbE, PsbF, PsbH, PsbI, PsbJ, PsbK, PsbL, PsbM, PsbT, PsbX, PsbY, PsbZ, Psb30/Ycf12, at least 3 peripheral proteins of the oxygen-evolving complex and a large number of cofactors. It forms dimeric complexes.

Its subcellular location is the plastid. The protein localises to the chloroplast thylakoid membrane. Functionally, one of the components of the core complex of photosystem II (PSII). PSII is a light-driven water:plastoquinone oxidoreductase that uses light energy to abstract electrons from H(2)O, generating O(2) and a proton gradient subsequently used for ATP formation. It consists of a core antenna complex that captures photons, and an electron transfer chain that converts photonic excitation into a charge separation. This subunit is found at the monomer-monomer interface and is required for correct PSII assembly and/or dimerization. The polypeptide is Photosystem II reaction center protein L (Staurastrum punctulatum (Green alga)).